The chain runs to 275 residues: MIVTIVGWLVLFVFLPNLMIIGTSFLTRDDASFVKMVFTLDNYTRLLDPLYFEVLLHSLNMALIATLACLVLGYPFAWFLAKLPHKVRPLLLFLLIVPFWTNSLIRIYGLKIFLSTKGYLNEFLLWLGVIDTPIRIMFTPSAVIIGLVYILLPFMVMPLYSSIEKLDKPLLEAARDLGASKLQTFIRIIIPLTMPGIIAGCLLVMLPAMGLFYVSDLMGGAKNLLIGNVIKVQFLNIRDWPFGAATSITLTIVMGLMLLVYWRASRLLNKKVELE.

A helical transmembrane segment spans residues M1–I21. Residues G22–N60 are Periplasmic-facing. One can recognise an ABC transmembrane type-1 domain in the interval L55–Y261. The chain crosses the membrane as a helical span at residues M61–A81. At K82 to P89 the chain is on the cytoplasmic side. A helical membrane pass occupies residues L90–L110. At K111 to R135 the chain is on the periplasmic side. A helical membrane pass occupies residues I136 to V156. Over M157–R187 the chain is Cytoplasmic. A helical transmembrane segment spans residues I188–A208. Residues M209 to P241 lie on the Periplasmic side of the membrane. The chain crosses the membrane as a helical span at residues F242 to W262. At R263 to E275 the chain is on the cytoplasmic side.

The protein belongs to the binding-protein-dependent transport system permease family. CysTW subfamily.

It localises to the cell inner membrane. Functionally, required for the activity of the bacterial periplasmic transport system of putrescine and spermidine. The chain is Spermidine/putrescine transport system permease protein PotB (potB) from Escherichia coli (strain K12).